We begin with the raw amino-acid sequence, 598 residues long: UvrABC system protein C (598 aa).

One can recognise a GIY-YIG domain in the interval 13 to 92 (SSPGVYLMKD…IKKYQPRYNV (80 aa)). In terms of domain architecture, UVR spans 206–241 (RSTISNLEKAIEKASQEQKFEHAAALYRTLTLIRQT).

It belongs to the UvrC family. Interacts with UvrB in an incision complex.

It localises to the cytoplasm. In terms of biological role, the UvrABC repair system catalyzes the recognition and processing of DNA lesions. UvrC both incises the 5' and 3' sides of the lesion. The N-terminal half is responsible for the 3' incision and the C-terminal half is responsible for the 5' incision. The polypeptide is UvrABC system protein C (Chlamydia trachomatis serovar A (strain ATCC VR-571B / DSM 19440 / HAR-13)).